The following is a 193-amino-acid chain: Segregation and condensation protein B (193 aa).

The protein belongs to the ScpB family. Homodimer. Homodimerization may be required to stabilize the binding of ScpA to the Smc head domains. Component of a cohesin-like complex composed of ScpA, ScpB and the Smc homodimer, in which ScpA and ScpB bind to the head domain of Smc. The presence of the three proteins is required for the association of the complex with DNA.

The protein resides in the cytoplasm. Functionally, participates in chromosomal partition during cell division. May act via the formation of a condensin-like complex containing Smc and ScpA that pull DNA away from mid-cell into both cell halves. This chain is Segregation and condensation protein B, found in Streptococcus thermophilus (strain CNRZ 1066).